Reading from the N-terminus, the 331-residue chain is 6-phosphogluconolactonase (331 aa).

The residue at position 287 (Lys287) is an N6-acetyllysine.

The protein belongs to the cycloisomerase 2 family.

The catalysed reaction is 6-phospho-D-glucono-1,5-lactone + H2O = 6-phospho-D-gluconate + H(+). It participates in carbohydrate degradation; pentose phosphate pathway; D-ribulose 5-phosphate from D-glucose 6-phosphate (oxidative stage): step 2/3. In terms of biological role, catalyzes the hydrolysis of 6-phosphogluconolactone to 6-phosphogluconate. This is 6-phosphogluconolactonase from Shigella sonnei (strain Ss046).